Reading from the N-terminus, the 165-residue chain is Cyclic pyranopterin monophosphate synthase (165 aa).

Residues 83-85 (FCH) and 120-121 (ME) contribute to the substrate site. The active site involves aspartate 135.

The protein belongs to the MoaC family. Homohexamer; trimer of dimers.

It carries out the reaction (8S)-3',8-cyclo-7,8-dihydroguanosine 5'-triphosphate = cyclic pyranopterin phosphate + diphosphate. It participates in cofactor biosynthesis; molybdopterin biosynthesis. Catalyzes the conversion of (8S)-3',8-cyclo-7,8-dihydroguanosine 5'-triphosphate to cyclic pyranopterin monophosphate (cPMP). The protein is Cyclic pyranopterin monophosphate synthase of Xanthomonas campestris pv. campestris (strain 8004).